Consider the following 656-residue polypeptide: Fidgetin-like protein 1 (656 aa).

The span at 293-302 (KYSNQPQRNP) shows a compositional bias: polar residues. Residues 293-354 (KYSNQPQRNP…QGNSEMNAPS (62 aa)) form a disordered region. Over residues 331 to 340 (RQEDVQDSNR) the composition is skewed to basic and acidic residues. Residues alanine 386 and 426 to 431 (GTGKTL) contribute to the ATP site.

It belongs to the AAA ATPase family. As to quaternary structure, hexamer. Requires Mg(2+) as cofactor.

It is found in the nucleus. It localises to the cytoplasm. The protein localises to the perinuclear region. It carries out the reaction ATP + H2O = ADP + phosphate + H(+). Its function is as follows. May be involved in DNA double-strand break (DBS) repair via homologous recombination (HR). May regulate osteoblast proliferation and differentiation. The protein is Fidgetin-like protein 1 (fignl1) of Xenopus tropicalis (Western clawed frog).